The chain runs to 262 residues: Octanoyltransferase (262 aa).

A BPL/LPL catalytic domain is found at 41–232; it reads PQLPDGLLLL…SFCQVFGLQA (192 aa). Substrate is bound by residues 96–103, 163–165, and 176–178; these read RGGEVTYH, AIG, and GFA. Residue C194 is the Acyl-thioester intermediate of the active site.

This sequence belongs to the LipB family.

The protein resides in the cytoplasm. The catalysed reaction is octanoyl-[ACP] + L-lysyl-[protein] = N(6)-octanoyl-L-lysyl-[protein] + holo-[ACP] + H(+). It participates in protein modification; protein lipoylation via endogenous pathway; protein N(6)-(lipoyl)lysine from octanoyl-[acyl-carrier-protein]: step 1/2. Catalyzes the transfer of endogenously produced octanoic acid from octanoyl-acyl-carrier-protein onto the lipoyl domains of lipoate-dependent enzymes. Lipoyl-ACP can also act as a substrate although octanoyl-ACP is likely to be the physiological substrate. The sequence is that of Octanoyltransferase from Synechococcus sp. (strain JA-2-3B'a(2-13)) (Cyanobacteria bacterium Yellowstone B-Prime).